We begin with the raw amino-acid sequence, 86 residues long: Small ribosomal subunit protein bS20 (86 aa).

It belongs to the bacterial ribosomal protein bS20 family.

Functionally, binds directly to 16S ribosomal RNA. This Mycolicibacterium vanbaalenii (strain DSM 7251 / JCM 13017 / BCRC 16820 / KCTC 9966 / NRRL B-24157 / PYR-1) (Mycobacterium vanbaalenii) protein is Small ribosomal subunit protein bS20.